Here is a 159-residue protein sequence, read N- to C-terminus: Nanos homolog 3 (159 aa).

The interval 42-87 is disordered; sequence QEMQSDADSDEQAAALLESPSGPIRSRDSPEQNTSPGGGKPKSSPA. The Nanos-type zinc finger occupies 91–145; it reads FCSFCKHNGETEAVYTSHYLKNRDGDVMCPYLRQYKCPLCGATGAKAHTKRFCPM. The Zn(2+) site is built by Cys-92, Cys-95, His-108, Cys-119, Cys-127, Cys-130, His-138, and Cys-143. Short sequence motifs (C2HC) lie at residues 92–119 and 127–143; these read CSFCKHNGETEAVYTSHYLKNRDGDVMC and CPLCGATGAKAHTKRFC. The interval 92–159 is interaction with mylpfa; the sequence is CSFCKHNGET…YCSVYAKSTW (68 aa).

It belongs to the nanos family. Interacts (via C-terminus) with myosin mylpfa/mylz2; the interaction negatively regulates mylpfa phosphorylation. In the embryo, displays early ubiquitous expression before being restricted to primordial germ cells in a 3'-UTR-dependent manner. Expressed in early stage germ cells in larval and adult ovaries.

The protein resides in the cytoplasm. It localises to the perinuclear region. RNA-binding protein which binds to RNA with no sequence specificity. Probably represses translation of specific mRNAs. Essential for the development of primordial germ cells (PGCs) by ensuring their proper migration and survival but is not required for PGC specification. Also required to maintain oocyte production in the adult ovary. Negatively regulates phosphorylation of myosin mylpfa/mylz2. This is Nanos homolog 3 from Danio rerio (Zebrafish).